The chain runs to 194 residues: Thymidine kinase (194 aa).

ATP-binding positions include 15-22 (GPMFSGKS) and 89-92 (DEAH). Glu-90 serves as the catalytic Proton acceptor. Positions 146, 149, 178, and 181 each coordinate Zn(2+).

The protein belongs to the thymidine kinase family. As to quaternary structure, homotetramer.

The protein localises to the cytoplasm. The enzyme catalyses thymidine + ATP = dTMP + ADP + H(+). The sequence is that of Thymidine kinase from Metamycoplasma arthritidis (strain 158L3-1) (Mycoplasma arthritidis).